We begin with the raw amino-acid sequence, 420 residues long: Carboxypeptidase A4 (420 aa).

Residues 1 to 16 (MKWLLFFGALIGAGIC) form the signal peptide. Residues 17–113 (GRDKFFGDQV…EMQHNEGIER (97 aa)) constitute a propeptide, activation peptide. A protein is bound by residues Pro69, Val71, Asn118, Tyr122, His123, Glu126, and Phe162. The 295-residue stretch at 121-415 (AYHPLEAIYH…LGLKTIMEHV (295 aa)) folds into the Peptidase M14 domain. Positions 180 and 183 each coordinate Zn(2+). The cysteines at positions 249 and 272 are disulfide-linked. An N-linked (GlcNAc...) asparagine glycan is attached at Asn259. His307 serves as a coordination point for Zn(2+). Catalysis depends on Glu381, which acts as the Proton donor/acceptor.

It belongs to the peptidase M14 family. As to quaternary structure, interacts with LXN. Zn(2+) serves as cofactor.

Its subcellular location is the secreted. Functionally, metalloprotease that cleaves hydrophobic C-terminal residues with a preference for -Phe, -Leu, -Ile, -Met, -Tyr and -Val. May function in peptide hormone and/or neuropeptide catabolism. The protein is Carboxypeptidase A4 (Cpa4) of Mus musculus (Mouse).